Here is a 269-residue protein sequence, read N- to C-terminus: Putative phosphatase M6_Spy0533 (269 aa).

Asp-9 acts as the Nucleophile in catalysis. Asp-9 contacts Mg(2+). Residue Ile-10 coordinates phosphate. Asp-11 lines the Mg(2+) pocket. Phosphate is bound by residues 43 to 44 and Lys-196; that span reads TG. Asp-219 lines the Mg(2+) pocket. Asn-222 is a binding site for phosphate.

Requires Mg(2+) as cofactor.

This Streptococcus pyogenes serotype M6 (strain ATCC BAA-946 / MGAS10394) protein is Putative phosphatase M6_Spy0533.